A 413-amino-acid chain; its full sequence is Multidrug resistance protein MdtA (413 aa).

Positions 1-20 (MKGSNTFRWAIAIGVVVAAA) are cleaved as a signal peptide. Disordered regions lie at residues 31 to 57 (SPTA…RDGP) and 391 to 413 (EPQT…GARA). Residues 32–49 (PTAAPGVAAQAQHTAAAG) are compositionally biased toward low complexity. Basic and acidic residues predominate over residues 397–413 (ADEKSPSRHEGQKGARA).

The protein belongs to the membrane fusion protein (MFP) (TC 8.A.1) family. Part of a tripartite efflux system composed of MdtA, MdtB and MdtC.

It localises to the cell inner membrane. The protein is Multidrug resistance protein MdtA of Salmonella typhi.